The sequence spans 149 residues: Large ribosomal subunit protein uL15 (149 aa).

The segment at 8 to 49 (HDLRPAAGSNKPKTRVGRGEASKGKTAGRGTKGTGARKQVPA) is disordered. Over residues 31–45 (GKTAGRGTKGTGARK) the composition is skewed to low complexity.

The protein belongs to the universal ribosomal protein uL15 family. In terms of assembly, part of the 50S ribosomal subunit.

Functionally, binds to the 23S rRNA. This is Large ribosomal subunit protein uL15 from Corynebacterium aurimucosum (strain ATCC 700975 / DSM 44827 / CIP 107346 / CN-1) (Corynebacterium nigricans).